The primary structure comprises 439 residues: MLEGYRGKALELLSSLGAEIGDVLQVYNDKVSVKGILMPSYSRDDSVIVLKLDNGYNAGFSVNKVKVSLLEKGNRPQERSEHRELLPGKVKIISTGGTIVSKVEYETGAVRPALSTEEIIRFVPEIQEITSISAEILFSILSENMKPEFWVKIAEAVKRAFDEGSEGVVVAHGTDTMSYTAAALAFSIQRLPGPVVLVGSQRSSDRPSSDSGINLVSSVLLAKEAPFGEVVVNMHGESSDTYTLAHRGVKVRKMHTSRRDAFQSINDHPLAKVLWKERTVKVLRNDYLRRSDGVELNPKFENRVFLLKFYPGLRPDIVDILLSSGYRGIIVEGTGLGHTSSDFQEAFKRAVKEGLFVGMTSQCLFGRVNMNVYQTGRLLQQSGVVPLGDMLPEVALVKLMWALGQTSDLEEVKRIMLTNLVGEYNPRHSLDHFPRWKHE.

The region spanning 88–419 is the Asparaginase/glutaminase domain; that stretch reads GKVKIISTGG…EEVKRIMLTN (332 aa). Residues Thr98, Thr174, Asp175, and Lys253 contribute to the active site.

The protein belongs to the asparaginase 1 family. GatD subfamily. As to quaternary structure, heterodimer of GatD and GatE.

The enzyme catalyses L-glutamyl-tRNA(Gln) + L-glutamine + ATP + H2O = L-glutaminyl-tRNA(Gln) + L-glutamate + ADP + phosphate + H(+). Functionally, allows the formation of correctly charged Gln-tRNA(Gln) through the transamidation of misacylated Glu-tRNA(Gln) in organisms which lack glutaminyl-tRNA synthetase. The reaction takes place in the presence of glutamine and ATP through an activated gamma-phospho-Glu-tRNA(Gln). The GatDE system is specific for glutamate and does not act on aspartate. This Metallosphaera sedula (strain ATCC 51363 / DSM 5348 / JCM 9185 / NBRC 15509 / TH2) protein is Glutamyl-tRNA(Gln) amidotransferase subunit D.